Consider the following 1087-residue polypeptide: Formin-H (1087 aa).

Residues 1–23 show a composition bias toward polar residues; it reads MSFDLESNSSGGSTIGRNSSIRL. The tract at residues 1–25 is disordered; that stretch reads MSFDLESNSSGGSTIGRNSSIRLSS. The region spanning 34-394 is the GBD/FH3 domain; that stretch reads VSLNEIIDLD…QLEDELKIHP (361 aa). Composition is skewed to low complexity over residues 416–436 and 549–558; these read FGFG…SMAK and SPGSTLSPSP. Disordered stretches follow at residues 416–445, 549–625, and 1048–1087; these read FGFG…DNEE, SPGS…PAKP, and VDSL…QLKK. Residues 433–461 adopt a coiled-coil conformation; that stretch reads SMAKTELKKDNEEKQKTIEHLLKQLNKFS. Residues 569–588 are compositionally biased toward polar residues; that stretch reads FGITSSSIHTSTDKLTNSTE. Residues 589–615 form the FH1 domain; it reads PILGSPPPPPPPPMSGGGGPPPPPPPP. A compositionally biased stretch (pro residues) spans 592–616; sequence GSPPPPPPPPMSGGGGPPPPPPPPG. One can recognise an FH2 domain in the interval 623-1016; sequence AKPIIKPSVK…ENSKMEDPEK (394 aa). In terms of domain architecture, DAD spans 1013–1051; the sequence is DPEKGGLQDLSSQIRSGQLFKDRRVGDSVIAQMQNVDSL.

The protein belongs to the formin homology family. Diaphanous subfamily. As to quaternary structure, interacts with vasP, proB/profilin-2 and rac1A. Interacts (via GBD/FH3 domain) with activated Rho-GTPases.

Its subcellular location is the cytoplasm. The protein resides in the cell cortex. It is found in the cytoskeleton. Its function is as follows. Formins play an important role in the nucleation of actin and the formation of linear actin filaments. Important for cell migration and formation, elongation and maintenance of filopodia. Specifically controls filopodial dynamics by regulating actin turnover at the barbed ends of actin filaments. The protein is Formin-H (forH) of Dictyostelium discoideum (Social amoeba).